Reading from the N-terminus, the 112-residue chain is Large ribosomal subunit protein eL34A (112 aa).

Belongs to the eukaryotic ribosomal protein eL34 family. Component of the large ribosomal subunit (LSU). Mature yeast ribosomes consist of a small (40S) and a large (60S) subunit. The 40S small subunit contains 1 molecule of ribosomal RNA (18S rRNA) and at least 33 different proteins. The large 60S subunit contains 3 rRNA molecules (25S, 5.8S and 5S rRNA) and at least 46 different proteins.

It localises to the cytoplasm. Component of the ribosome, a large ribonucleoprotein complex responsible for the synthesis of proteins in the cell. The small ribosomal subunit (SSU) binds messenger RNAs (mRNAs) and translates the encoded message by selecting cognate aminoacyl-transfer RNA (tRNA) molecules. The large subunit (LSU) contains the ribosomal catalytic site termed the peptidyl transferase center (PTC), which catalyzes the formation of peptide bonds, thereby polymerizing the amino acids delivered by tRNAs into a polypeptide chain. The nascent polypeptides leave the ribosome through a tunnel in the LSU and interact with protein factors that function in enzymatic processing, targeting, and the membrane insertion of nascent chains at the exit of the ribosomal tunnel. This is Large ribosomal subunit protein eL34A (rpl3401) from Schizosaccharomyces pombe (strain 972 / ATCC 24843) (Fission yeast).